The chain runs to 547 residues: (E)-beta-caryophyllene synthase (547 aa).

Residues aspartate 302 and aspartate 306 each coordinate Mg(2+). Residues aspartate 302, aspartate 306, arginine 443, and asparagine 446 each coordinate substrate. The short motif at 302-306 (DDLYD) is the DDXXD motif element. Mg(2+) is bound by residues asparagine 446 and glutamate 454.

It belongs to the terpene synthase family. As to quaternary structure, monomer. Mg(2+) serves as cofactor. Mn(2+) is required as a cofactor.

The protein resides in the cytoplasm. The catalysed reaction is (2E,6E)-farnesyl diphosphate = (-)-(E)-beta-caryophyllene + diphosphate. The protein operates within secondary metabolite biosynthesis; terpenoid biosynthesis. Component of the volatile terpenes biosynthesis pathways. Sesquiterpene synthase that converts farnesyl diphosphate to (E)-beta-caryophyllene. Involved in indirect defense by producing volatile signals attracting natural enemies of herbivores. The polypeptide is (E)-beta-caryophyllene synthase (Zea mays (Maize)).